The following is an 875-amino-acid chain: DNA mismatch repair protein MutS (875 aa).

625 to 632 (GPNMGGKS) serves as a coordination point for ATP.

Belongs to the DNA mismatch repair MutS family.

This protein is involved in the repair of mismatches in DNA. It is possible that it carries out the mismatch recognition step. This protein has a weak ATPase activity. This chain is DNA mismatch repair protein MutS, found in Symbiobacterium thermophilum (strain DSM 24528 / JCM 14929 / IAM 14863 / T).